A 393-amino-acid chain; its full sequence is Acetylornithine aminotransferase (393 aa).

Residues 96–97 (GT) and F129 each bind pyridoxal 5'-phosphate. R132 contacts N(2)-acetyl-L-ornithine. 214-217 (DEVQ) provides a ligand contact to pyridoxal 5'-phosphate. K243 carries the post-translational modification N6-(pyridoxal phosphate)lysine. S271 contacts N(2)-acetyl-L-ornithine. T272 contributes to the pyridoxal 5'-phosphate binding site.

This sequence belongs to the class-III pyridoxal-phosphate-dependent aminotransferase family. ArgD subfamily. As to quaternary structure, homodimer. Requires pyridoxal 5'-phosphate as cofactor.

The protein localises to the cytoplasm. The enzyme catalyses N(2)-acetyl-L-ornithine + 2-oxoglutarate = N-acetyl-L-glutamate 5-semialdehyde + L-glutamate. It participates in amino-acid biosynthesis; L-arginine biosynthesis; N(2)-acetyl-L-ornithine from L-glutamate: step 4/4. The polypeptide is Acetylornithine aminotransferase (Rhodobacter capsulatus (strain ATCC BAA-309 / NBRC 16581 / SB1003)).